The sequence spans 474 residues: 3-isopropylmalate dehydratase large subunit (474 aa).

The [4Fe-4S] cluster site is built by Cys353, Cys414, and Cys417.

This sequence belongs to the aconitase/IPM isomerase family. LeuC type 1 subfamily. In terms of assembly, heterodimer of LeuC and LeuD. The cofactor is [4Fe-4S] cluster.

The catalysed reaction is (2R,3S)-3-isopropylmalate = (2S)-2-isopropylmalate. Its pathway is amino-acid biosynthesis; L-leucine biosynthesis; L-leucine from 3-methyl-2-oxobutanoate: step 2/4. In terms of biological role, catalyzes the isomerization between 2-isopropylmalate and 3-isopropylmalate, via the formation of 2-isopropylmaleate. This is 3-isopropylmalate dehydratase large subunit from Pseudomonas aeruginosa (strain LESB58).